The chain runs to 592 residues: MIESSSFMKKTSSENSIGSRSNIHEASTFSSEHENGDQSLTISQIVIRSDFANETSERQSKIILERFNEGIKNTAFTDSPVLGRAQPRLDVSYFAMAHRNQIVELFDPRGQRFGTVYSADPTVEIRYLGSVAKTCRYFGSFGKHVLNVPSGHFAKAMTKNRPIIYGEGPHVIIDPTFEFDERYGFVNQQEPFINHSTINILRVPSGKVAKVWIGTQPLILESRREPYVFVDAQFKMVEDTSESGNNKYFKNSSATFMEHGSIKRIIPHTGEVAITYNNGILTIIPPPKDGKPVIIDSPTHNFEGFIQTSLQTCLFPSKETKQQAIKDNKNATSDEVNLKIFQTRDSLRVGVVLVVAFRIVDPEIALTKLGKEGIINHIENVSFADMGKAIQLSTLQEIMYFNDTKPSANSTNETVHTIQDRVKSHLARDLCEYGIELARLQIETMKVLDSEIAKKLAGQSVTSAEFTTKQATLVKEYDIKTTEARLKAETDNIALEQKGKAIIAEAQAKLESAQKQAQALLITAEAQKKVQEMQGELFTKYPILAEIELAKIKSEALKSATLYITPQDAGNFMNSPLVYMDRLLGHQQKLEK.

Residues M1 to S30 show a composition bias toward polar residues. Residues M1–N35 are disordered. Residues K480–Q534 are a coiled coil. Residues D491–E555 are oligomerization domain.

It belongs to the vacuolin family. In terms of assembly, homotrimer.

The protein localises to the endosome membrane. It is found in the lysosome membrane. Its function is as follows. Negative regulator of late steps of the endocytic pathway. This Dictyostelium discoideum (Social amoeba) protein is Vacuolin-B (vacB).